A 529-amino-acid polypeptide reads, in one-letter code: MMKNSCRLLLILIGLWMANVSLAQKTFRNPIITGMNPDPSICRVGDDFYLVTSTFEYFPGLPVYHSKDLVHWKLIGHALSRPENNPLMGCNASTGGQYAPTLRYHDGTFYVIGTNYGGKGSQGVFYVTAKNPAGPWSDPVWVGNWYVDPSIEFIDGKMYFLSPDNQGSFLLGVMDPETGTFVEALRKVASGLGGSSPEGPHFYKIGDYYYIMSAEGGTGYEHREVIQRSKSPWGPYEPSPVNPVLSNMNCPDHPFQAIGHADLVQLKDGSWWAVCLGIRPVNGKYQHLGRETFLAPVTWDADGWPKVGKDGVVQETYLFPNLPSHVWMEQPVRDDFDQETLGLDWTFIRNPAHSFWSLTEKPGSLRLKGTAINFTTNDSPSFIGRRQAAFNLTASAKVNFIPKVENEEAGLVVRADDKNHYDLLITERNGQRVAMIRKTLKDKVVDTTCKELPATGEVILSITATETTYTFEIKAAHVSAILGTASTRDVSNEVVGGFTGVFIGMYASGNGQANTNPADFDWFDFRCLD.

An N-terminal signal peptide occupies residues 1-23 (MMKNSCRLLLILIGLWMANVSLA). The active-site Proton acceptor is the Asp-38. Glu-198 acts as the Proton donor in catalysis.

This sequence belongs to the glycosyl hydrolase 43 family.

Its subcellular location is the periplasm. The catalysed reaction is Hydrolysis of terminal non-reducing alpha-L-arabinofuranoside residues in alpha-L-arabinosides.. It participates in glucan metabolism; xyloglucan degradation. Functionally, alpha-L-arabinofuranosidase involved in xyloglucan degradation by mediating the cleavage of terminal non-reducing alpha-L-arabinofuranoside residues in xyloglucan branches, converting the 'S' units to 'X' units. In Bacteroides ovatus (strain ATCC 8483 / DSM 1896 / JCM 5824 / BCRC 10623 / CCUG 4943 / NCTC 11153), this protein is Non-reducing end alpha-L-arabinofuranosidase BoGH43B.